The chain runs to 519 residues: Membrane-bound glycerophospholipid O-acyltransferase 2 (519 aa).

The next 6 membrane-spanning stretches (helical) occupy residues 22 to 42 (PIDQ…AVWF), 61 to 81 (TLLG…HFLV), 88 to 108 (CIMI…FALG), 184 to 204 (FMGI…FIEG), 236 to 256 (LLVC…LPVE), and 263 to 283 (FQAT…LLAA). Active-site residues include Asn-341 and His-372. The next 3 membrane-spanning stretches (helical) occupy residues 365-385 (FFLS…FLTG), 415-435 (LITW…FVLL), and 443-463 (FYSS…LLLP). The segment at 497 to 519 (FSTMNNVCNQNRDTGSRHSSLTQ) is disordered.

This sequence belongs to the membrane-bound acyltransferase family. In terms of tissue distribution, highly expressed in epididymis, brain, testis, and ovary.

The protein resides in the endoplasmic reticulum membrane. It carries out the reaction a 1-acyl-sn-glycero-3-phosphocholine + an acyl-CoA = a 1,2-diacyl-sn-glycero-3-phosphocholine + CoA. The enzyme catalyses a 1-acyl-sn-glycero-3-phosphoethanolamine + an acyl-CoA = a 1,2-diacyl-sn-glycero-3-phosphoethanolamine + CoA. The catalysed reaction is a 1-O-(1Z-alkenyl)-sn-glycero-3-phosphocholine + (9Z)-octadecenoyl-CoA = 1-O-(1Z)-alkenyl-2-(9Z)-octadecenoyl-sn-glycero-3-phosphocholine + CoA. It catalyses the reaction a 1-O-(1Z-alkenyl)-sn-glycero-3-phosphoethanolamine + (9Z)-octadecenoyl-CoA = 1-O-(1Z)-alkenyl-2-(9Z)-octadecenoyl-sn-glycero-3-phosphoethanolamine + CoA. It carries out the reaction 1-octadecanoyl-sn-glycero-3-phosphoethanolamine + (9Z)-octadecenoyl-CoA = 1-octadecanoyl-2-(9Z-octadecenoyl)-sn-glycero-3-phosphoethanolamine + CoA. The enzyme catalyses 1-octadecanoyl-sn-glycero-3-phosphocholine + (9Z)-octadecenoyl-CoA = 1-octadecanoyl-2-(9Z-octadecenoyl)-sn-glycero-3-phosphocholine + CoA. The catalysed reaction is 1-(9Z-octadecenoyl)-sn-glycero-3-phosphoethanolamine + (9Z)-octadecenoyl-CoA = 1,2-di-(9Z-octadecenoyl)-sn-glycero-3-phosphoethanolamine + CoA. It catalyses the reaction 1-hexadecanoyl-sn-glycero-3-phosphoethanolamine + (9Z)-octadecenoyl-CoA = 1-hexadecanoyl-2-(9Z-octadecenoyl)-sn-glycero-3-phosphoethanolamine + CoA. It carries out the reaction 1-hexadecanoyl-sn-glycero-3-phosphocholine + (9Z)-octadecenoyl-CoA = 1-hexadecanoyl-2-(9Z-octadecenoyl)-sn-glycero-3-phosphocholine + CoA. The enzyme catalyses (9Z)-hexadecenoyl-CoA + 1-hexadecanoyl-sn-glycero-3-phosphocholine = 1-hexadecanoyl-2-(9Z-hexadecenoyl)-sn-glycero-3-phosphocholine + CoA. The catalysed reaction is 1-hexadecanoyl-sn-glycero-3-phosphoethanolamine + (9Z)-hexadecenoyl-CoA = 1-hexadecanoyl-2-(9Z)-hexadecenoyl-sn-glycero-3-phosphoethanolamine + CoA. It catalyses the reaction (9Z,12Z)-octadecadienoyl-CoA + 1-hexadecanoyl-sn-glycero-3-phosphocholine = 1-hexadecanoyl-2-(9Z,12Z-octadecadienoyl)-sn-glycero-3-phosphocholine + CoA. It functions in the pathway lipid metabolism; phospholipid metabolism. Partially inhibited by thimerosal. Acyltransferase which catalyzes the transfer of an acyl group from an acyl-CoA to a lysophospholipid leading to the production of a phospholipid and participates in the reacylation step of the phospholipid remodeling pathway also known as the Lands cycle. Catalyzes the acylation of lysophosphatidylcholine (1-acyl-sn-glycero-3-phosphocholine or LPC) and to a lesser extend lysophosphatidylethanolamine (1-acyl-sn-glycero-3-phosphoethanolamine or LPE). Does not acylates lysophosphatidic acid (LPA) and lysophosphatidylserine. Prefers oleoyl-CoA as the acyl donor. May be involved in chondrocyte differentiation. The protein is Membrane-bound glycerophospholipid O-acyltransferase 2 of Mus musculus (Mouse).